Consider the following 271-residue polypeptide: Short chain dehydrogenase asqE (271 aa).

Positions 22, 70, and 99 each coordinate NADP(+). Residues S152 and S153 each act as proton donor in the active site. Positions 167, 171, and 203 each coordinate NADP(+). Y167 (proton acceptor) is an active-site residue. Residue K171 is the Lowers pKa of active site Tyr of the active site.

Belongs to the short-chain dehydrogenases/reductases (SDR) family.

It catalyses the reaction a primary alcohol + NAD(+) = an aldehyde + NADH + H(+). The catalysed reaction is a secondary alcohol + NAD(+) = a ketone + NADH + H(+). The protein operates within secondary metabolite biosynthesis. It functions in the pathway alkaloid biosynthesis. Its pathway is mycotoxin biosynthesis. In terms of biological role, short chain dehydrogenase; part of the gene cluster that mediates the biosynthesis of the aspoquinolone mycotoxins. The role of asqE within the aspoquinolone pathway has still to be determined. The first step of the pathway is catalyzed by the nonribosomal peptide synthetase asqK that condenses anthranilic acid and O-methyl-L-tyrosine to produce 4'-methoxycyclopeptin. 4'-methoxycyclopeptin is then converted to 4'-methoxydehydrocyclopeptin by the ketoglutarate-dependent dioxygenase asqJ. AsqJ also converts its first product 4'-methoxydehydrocyclopeptin to 4'-methoxycyclopenin. The following conversion of 4'-methoxycyclopenin into 4'-methoxyviridicatin is catalyzed by the cyclopenase asqI. 4'-methoxyviridicatin is the precursor of quinolone natural products, and is further converted to quinolinone B. The prenyltransferase asqH1 then catalyzes the canonical Friedel-Crafts alkylation of quinolinone B with dimethylallyl cation to yield dimethylallyl quinolone, which is subjected to FAD-dependent dehydrogenation by the FAD-linked oxidoreductase asqF to yield conjugated aryl diene. The delta(3') double bond then serves as the site of the second alkylation with DMAPP catalyzed by the prenyltransferase asqH2 to yield a carbenium ion intermediate, which can be attacked by H(2)O to yield a styrenyl quinolone containing a C3'-hydroxyprenyl chain. The FAD-dependent monooxygenase asqG performs epoxidation of the terminal C7'-C8' olefin. Finally, after dehydratation of the epoxide at C3 by asqC, the quinolone epoxide rearrangement protein asqO catalyzes an enzymatic 3-exo-tet cyclization to yield the cyclopropyl-THF ring system in aspoquinolone. This Emericella nidulans (strain FGSC A4 / ATCC 38163 / CBS 112.46 / NRRL 194 / M139) (Aspergillus nidulans) protein is Short chain dehydrogenase asqE.